Consider the following 361-residue polypeptide: Chorismate synthase (361 aa).

Residues Arg-48 and Arg-54 each coordinate NADP(+). FMN contacts are provided by residues 125–127 (RSS), 238–239 (NA), Gly-278, 293–297 (KPTSS), and Arg-319.

This sequence belongs to the chorismate synthase family. Homotetramer. FMNH2 is required as a cofactor.

The enzyme catalyses 5-O-(1-carboxyvinyl)-3-phosphoshikimate = chorismate + phosphate. Its pathway is metabolic intermediate biosynthesis; chorismate biosynthesis; chorismate from D-erythrose 4-phosphate and phosphoenolpyruvate: step 7/7. Functionally, catalyzes the anti-1,4-elimination of the C-3 phosphate and the C-6 proR hydrogen from 5-enolpyruvylshikimate-3-phosphate (EPSP) to yield chorismate, which is the branch point compound that serves as the starting substrate for the three terminal pathways of aromatic amino acid biosynthesis. This reaction introduces a second double bond into the aromatic ring system. The chain is Chorismate synthase from Vibrio vulnificus (strain YJ016).